The chain runs to 400 residues: Enolase (400 aa).

Q153 contacts (2R)-2-phosphoglycerate. E195 functions as the Proton donor in the catalytic mechanism. D231, E274, and D301 together coordinate Mg(2+). The (2R)-2-phosphoglycerate site is built by K326, R355, S356, and K377. K326 (proton acceptor) is an active-site residue.

It belongs to the enolase family. The cofactor is Mg(2+).

The protein resides in the cytoplasm. It localises to the secreted. Its subcellular location is the cell surface. The enzyme catalyses (2R)-2-phosphoglycerate = phosphoenolpyruvate + H2O. Its pathway is carbohydrate degradation; glycolysis; pyruvate from D-glyceraldehyde 3-phosphate: step 4/5. Functionally, catalyzes the reversible conversion of 2-phosphoglycerate (2-PG) into phosphoenolpyruvate (PEP). It is essential for the degradation of carbohydrates via glycolysis. This chain is Enolase, found in Halorubrum lacusprofundi (strain ATCC 49239 / DSM 5036 / JCM 8891 / ACAM 34).